A 440-amino-acid chain; its full sequence is Thymidine phosphorylase (440 aa).

This sequence belongs to the thymidine/pyrimidine-nucleoside phosphorylase family. Homodimer.

It carries out the reaction thymidine + phosphate = 2-deoxy-alpha-D-ribose 1-phosphate + thymine. Its pathway is pyrimidine metabolism; dTMP biosynthesis via salvage pathway; dTMP from thymine: step 1/2. Its function is as follows. The enzymes which catalyze the reversible phosphorolysis of pyrimidine nucleosides are involved in the degradation of these compounds and in their utilization as carbon and energy sources, or in the rescue of pyrimidine bases for nucleotide synthesis. The chain is Thymidine phosphorylase from Serratia proteamaculans (strain 568).